The following is a 542-amino-acid chain: MATTVTCTRFTDEYQLYEDIGKGAFSVVRRCVKLCTGHEYAAKIINTKKLSARDHQKLEREARICRLLKHSNIVRLHDSISEEGFHYLVFDLVTGGELFEDIVAREYYSEADASHCIQQILEAVLHCHQMGVVHRDLKPENLLLASKCKGAAVKLADFGLAIEVQGDQQAWFGFAGTPGYLSPEVLRKEAYGKPVDIWACGVILYILLVGYPPFWDEDQHKLYQQIKAGAYDFPSPEWDTVTPEAKNLINQMLTINPAKRIMAHEALKHPWVCQRSTVASMMHRQETVECLKKFNARRKLKGAILTTMLATRNFSVGRQTTAPATMSTAASGATMGLVEQAKSLLNKKADGVKPQTNSTKNSAAATSPKGTLPPAALEPQTTVIHNPVDGIKESSDSTHTTIEDEDTKARKQEIIKITEQLIEAVNNGDFEAYAKICDPGLTSFEPEALGNLVEGMDFHRFYFENLLAKNSKPIHTTILNPHVHVIGEDAACIAYIRLTQYIDGQGRPRTSQSEETRVWHRRDGKWQNVHFHCSGAPVAPLQ.

In terms of domain architecture, Protein kinase spans 14 to 272 (YQLYEDIGKG…AHEALKHPWV (259 aa)). Tyr17 carries the post-translational modification Phosphotyrosine. Residues 20–28 (IGKGAFSVV) and Lys43 contribute to the ATP site. Asp136 serves as the catalytic Proton acceptor. An autoinhibitory domain region spans residues 283-292 (HRQETVECLK). Residue Thr287 is modified to Phosphothreonine; by autocatalysis. Positions 291–301 (LKKFNARRKLK) are calmodulin-binding. 2 positions are modified to phosphothreonine; by autocatalysis: Thr306 and Thr307. The segment at 349-407 (ADGVKPQTNSTKNSAAATSPKGTLPPAALEPQTTVIHNPVDGIKESSDSTHTTIEDEDT) is disordered. The span at 354–369 (PQTNSTKNSAAATSPK) shows a compositional bias: polar residues. Phosphoserine is present on residues Ser367, Ser394, and Ser397. Thr400 and Thr401 each carry phosphothreonine.

This sequence belongs to the protein kinase superfamily. CAMK Ser/Thr protein kinase family. CaMK subfamily. In terms of assembly, CAMK2 is composed of 4 different chains: alpha (CAMK2A), beta (CAMK2B), gamma (CAMK2G), and delta (CAMK2D). The different isoforms assemble into homo- or heteromultimeric holoenzymes composed of 12 subunits with two hexameric rings stacked one on top of the other. Interacts with SYNGAP1, CAMK2N2 and MPDZ. Interacts with FOXO3. Interacts (when in a kinase inactive state not associated with calmodulin) with ARC; leading to target ARC to inactive synapses. Interacts with CAMK2N1; this interaction requires CAMK2B activation by Ca(2+). Post-translationally, autophosphorylation of Thr-287 following activation by Ca(2+)/calmodulin. Phosphorylation of Thr-287 locks the kinase into an activated state.

Its subcellular location is the cytoplasm. The protein localises to the cytoskeleton. It localises to the microtubule organizing center. It is found in the centrosome. The protein resides in the sarcoplasmic reticulum membrane. Its subcellular location is the synapse. The enzyme catalyses L-seryl-[protein] + ATP = O-phospho-L-seryl-[protein] + ADP + H(+). It catalyses the reaction L-threonyl-[protein] + ATP = O-phospho-L-threonyl-[protein] + ADP + H(+). Activated by Ca(2+)/calmodulin. Binding of calmodulin results in conformational change that relieves intrasteric autoinhibition and allows autophosphorylation of Thr-287 which turns the kinase in a constitutively active form and confers to the kinase a Ca(2+)-independent activity. Functionally, calcium/calmodulin-dependent protein kinase that functions autonomously after Ca(2+)/calmodulin-binding and autophosphorylation, and is involved in dendritic spine and synapse formation, neuronal plasticity and regulation of sarcoplasmic reticulum Ca(2+) transport in skeletal muscle. In neurons, plays an essential structural role in the reorganization of the actin cytoskeleton during plasticity by binding and bundling actin filaments in a kinase-independent manner. This structural function is required for correct targeting of CaMK2A, which acts downstream of NMDAR to promote dendritic spine and synapse formation and maintain synaptic plasticity which enables long-term potentiation (LTP) and hippocampus-dependent learning. In developing hippocampal neurons, promotes arborization of the dendritic tree and in mature neurons, promotes dendritic remodeling. Also regulates the migration of developing neurons. Participates in the modulation of skeletal muscle function in response to exercise. In slow-twitch muscles, is involved in regulation of sarcoplasmic reticulum (SR) Ca(2+) transport and in fast-twitch muscle participates in the control of Ca(2+) release from the SR through phosphorylation of triadin, a ryanodine receptor-coupling factor, and phospholamban (PLN/PLB), an endogenous inhibitor of SERCA2A/ATP2A2. In response to interferon-gamma (IFN-gamma) stimulation, catalyzes phosphorylation of STAT1, stimulating the JAK-STAT signaling pathway. Phosphorylates reticulophagy regulator RETREG1 at 'Ser-147' under endoplasmic reticulum stress conditions which enhances RETREG1 oligomerization and its membrane scission and reticulophagy activity. The sequence is that of Calcium/calmodulin-dependent protein kinase type II subunit beta (CAMK2B) from Bos taurus (Bovine).